A 283-amino-acid chain; its full sequence is Orotidine 5'-phosphate decarboxylase (283 aa).

The active-site Proton donor is Lys-97.

This sequence belongs to the OMP decarboxylase family. Type 2 subfamily.

The enzyme catalyses orotidine 5'-phosphate + H(+) = UMP + CO2. Its pathway is pyrimidine metabolism; UMP biosynthesis via de novo pathway; UMP from orotate: step 2/2. This chain is Orotidine 5'-phosphate decarboxylase, found in Clostridium botulinum (strain ATCC 19397 / Type A).